The following is a 249-amino-acid chain: MIELGVNIDHVATLRQARRTWEPDPTWAAVEAHLGGADGITVHLREDRRHIQDDDVRRLRELTQIKLNLEMAATDEMVGIARSIKPEMAMLVPEGRHEVTTEGGLDIVSQEARLKDVIARLADAGIVTSVFIDAEIAQIDAAARIGARVCEIHTGPYAHAFHAQGRDAESPAVLAEIDKIRRAGEAICSHGMRFNAGHALNYYNVQPIARLPGIRELHIGHAIVSRAVFSGIREAVAEMKRLMREAAAG.

Asn-7 provides a ligand contact to 3-amino-2-oxopropyl phosphate. 1-deoxy-D-xylulose 5-phosphate is bound at residue 9–10 (DH). Arg-18 contributes to the 3-amino-2-oxopropyl phosphate binding site. The active-site Proton acceptor is His-43. Positions 45 and 50 each coordinate 1-deoxy-D-xylulose 5-phosphate. Catalysis depends on Glu-70, which acts as the Proton acceptor. Thr-100 provides a ligand contact to 1-deoxy-D-xylulose 5-phosphate. His-198 functions as the Proton donor in the catalytic mechanism. 3-amino-2-oxopropyl phosphate is bound by residues Ala-199 and 220–221 (GH).

The protein belongs to the PNP synthase family. Homooctamer; tetramer of dimers.

It localises to the cytoplasm. The catalysed reaction is 3-amino-2-oxopropyl phosphate + 1-deoxy-D-xylulose 5-phosphate = pyridoxine 5'-phosphate + phosphate + 2 H2O + H(+). It functions in the pathway cofactor biosynthesis; pyridoxine 5'-phosphate biosynthesis; pyridoxine 5'-phosphate from D-erythrose 4-phosphate: step 5/5. Catalyzes the complicated ring closure reaction between the two acyclic compounds 1-deoxy-D-xylulose-5-phosphate (DXP) and 3-amino-2-oxopropyl phosphate (1-amino-acetone-3-phosphate or AAP) to form pyridoxine 5'-phosphate (PNP) and inorganic phosphate. This Azoarcus sp. (strain BH72) protein is Pyridoxine 5'-phosphate synthase.